Reading from the N-terminus, the 258-residue chain is Ribosomal RNA small subunit methyltransferase J (258 aa).

Residues 107 to 108, 123 to 124, and D177 each bind S-adenosyl-L-methionine; these read RD and ER.

The protein belongs to the methyltransferase superfamily. RsmJ family.

It localises to the cytoplasm. It carries out the reaction guanosine(1516) in 16S rRNA + S-adenosyl-L-methionine = N(2)-methylguanosine(1516) in 16S rRNA + S-adenosyl-L-homocysteine + H(+). Functionally, specifically methylates the guanosine in position 1516 of 16S rRNA. The chain is Ribosomal RNA small subunit methyltransferase J from Stutzerimonas stutzeri (strain A1501) (Pseudomonas stutzeri).